We begin with the raw amino-acid sequence, 113 residues long: Nitrogenase vanadium-iron protein delta chain (113 aa).

As to quaternary structure, hexamer of two alpha, two beta, and two delta chains. Iron-sulfur cluster is required as a cofactor. The cofactor is vanadium cation.

It carries out the reaction N2 + 8 reduced [2Fe-2S]-[ferredoxin] + 16 ATP + 16 H2O = H2 + 8 oxidized [2Fe-2S]-[ferredoxin] + 2 NH4(+) + 16 ADP + 16 phosphate + 6 H(+). The key enzymatic reactions in nitrogen fixation are catalyzed by the nitrogenase complex, which has 2 components: the iron protein (component 2) and a component 1 which is either a molybdenum-iron protein, a vanadium-iron, or an iron-iron protein. The protein is Nitrogenase vanadium-iron protein delta chain (vnfG) of Azotobacter vinelandii.